A 232-amino-acid chain; its full sequence is Eukaryotic translation initiation factor NCBP (232 aa).

The span at 1–11 (MEPAVERKVPE) shows a compositional bias: basic and acidic residues. The disordered stretch occupies residues 1–49 (MEPAVERKVPEQEEQLQPSHARAEDAPPAAVEEEDEAEAEESERRNREL). The segment covering 31–41 (VEEEDEAEAEE) has biased composition (acidic residues).

This sequence belongs to the eukaryotic initiation factor 4E family. EIF4F is a multi-subunit complex, the composition of which varies with external and internal environmental conditions. It is composed of at least EIF4A, EIF4E and EIF4G. EIF4E is also known to interact with other partners. In higher plants two isoforms of EIF4F have been identified, named isoform EIF4F and isoform EIF(iso)4F. Isoform EIF4F has subunits p220 and p26, whereas isoform EIF(iso)4F has subunits p82 and p28.

Its function is as follows. Recognizes and binds the 7-methylguanosine-containing mRNA cap during an early step in the initiation of protein synthesis and facilitates ribosome binding by inducing the unwinding of the mRNAs secondary structures. The chain is Eukaryotic translation initiation factor NCBP (NCBP) from Triticum aestivum (Wheat).